We begin with the raw amino-acid sequence, 532 residues long: MELDLSPPHLSSSPEDLCPAPGTPPGTPRPPDTPLPEEVKRSQPLLIPTTGRKLREEERRATSLPSIPNPFPELCSPPSQSPILGGPSSARGLLPRDASRPHVVKVYSEDGACRSVEVAAGATARHVCEMLVQRAHALSDETWGLVECHPHLALERGLEDHESVVEVQAAWPVGGDSRFVFRKNFAKYELFKSSPHSLFPEKMVSSCLDAHTGISHEDLIQNFLNAGSFPEIQGFLQLRGSGRKLWKRFFCFLRRSGLYYSTKGTSKDPRHLQYVADVNESNVYVVTQGRKLYGMPTDFGFCVKPNKLRNGHKGLRIFCSEDEQSRTCWLAAFRLFKYGVQLYKNYQQAQSRHLHPSCLGSPPLRSASDNTLVAMDFSGHAGRVIENPREALSVALEEAQAWRKKTNHRLSLPMPASGTSLSAAIHRTQLWFHGRISREESQRLIGQQGLVDGLFLVRESQRNPQGFVLSLCHLQKVKHYLILPSEEEGRLYFSMDDGQTRFTDLLQLVEFHQLNRGILPCLLRHCCTRVAL.

The segment covering 1 to 20 has biased composition (low complexity); sequence MELDLSPPHLSSSPEDLCPA. The tract at residues 1–96 is disordered; sequence MELDLSPPHL…PSSARGLLPR (96 aa). Residues 21–34 show a composition bias toward pro residues; the sequence is PGTPPGTPRPPDTP. The 87-residue stretch at 100–186 folds into the Ras-associating domain; sequence RPHVVKVYSE…SRFVFRKNFA (87 aa). 2 positions are modified to phosphotyrosine; by FAK1: Tyr-188 and Tyr-338. Residues 229-338 form the PH domain; the sequence is FPEIQGFLQL…WLAAFRLFKY (110 aa). At Ser-361 the chain carries Phosphoserine. One can recognise an SH2 domain in the interval 431 to 527; it reads WFHGRISREE…ILPCLLRHCC (97 aa).

The protein belongs to the GRB7/10/14 family. As to quaternary structure, homodimer. Interacts (via SH2 domain) with EGFR, ERBB2, ERBB3 (when phosphorylated), ERBB4 (when phosphorylated), EPHB1, INSR, FGFR1, PDGFRA (tyrosine phosphorylated) and PDGFRB (tyrosine phosphorylated). Interacts with SHC1. Interacts with RND1. Interacts (when tyrosine phosphorylated) with FHL2 and HAX1. Interacts (via SH2 domain) with RET and PTK2/FAK1. Interacts (when not phosphorylated) with ELAVL1. In stressed cells, but not in normal cells, part of a complex that contains at least GRB7, PTK2/FAK1, STAU1, ELAVL1 and TIA1. Interacts (via SH2 domain) with KIT (phosphorylated). Interacts (via SH2 domain) with TEK/TIE2 (tyrosine phosphorylated). Phosphorylated on serine and threonine residues in response to heregulin. Phosphorylated on tyrosine residues by TEK/TIE2. Phosphorylated on tyrosine residues in response to NTN1 signaling. Phosphorylation promotes stress granule disassembly during recovery after cellular stress. Phosphorylated on tyrosine residues by PTK2/FAK1, and possibly also other kinases. Phosphorylation is enhanced by activation of receptor kinases. Tyrosine phosphorylation is essential for activation of down-stream protein kinases.

Its subcellular location is the cytoplasm. The protein resides in the cell junction. It is found in the focal adhesion. It localises to the cell membrane. The protein localises to the cytoplasmic granule. Its subcellular location is the cell projection. Adapter protein that interacts with the cytoplasmic domain of numerous receptor kinases and modulates down-stream signaling. Promotes activation of down-stream protein kinases, including STAT3, AKT1, MAPK1 and/or MAPK3. Promotes activation of HRAS. Plays a role in signal transduction in response to EGF. Plays a role in the regulation of cell proliferation and cell migration. Plays a role in the assembly and stability of RNA stress granules. Binds to the 5'UTR of target mRNA molecules and represses translation of target mRNA species, when not phosphorylated. Phosphorylation impairs RNA binding and promotes stress granule disassembly during recovery after cellular stress. The polypeptide is Growth factor receptor-bound protein 7 (GRB7) (Homo sapiens (Human)).